Reading from the N-terminus, the 626-residue chain is MAATATIPSSTTASATTTATAAALGEVEDEGLLASLFRDRFPEAQWRERPDVGRYLRELSGSGLERLRREPERLAEERAQLLQQTRDLAFANYKTFIRGAECTERIHRLFGDVEESLGRLLDRLPSLQQSCRNFVKEAEEISSNRRMNTLTLNRHTEILEILEIPQLMDTCVRNSYYEEALELAAYVRRLERKYSSIPVIQGIVNEVRQSMQLMLSQLIQQLRTNIQLPACLRVIGFLRQMDVFTEAELRVKFLQARDAWLRSILTAIPNDDPYFHITKTIEACRVHLFDIITQYRAIFSDEDPLLPPAMGEHMVNESAIFHGWVLQKVSQFLQVLETDLNRGIGSRLDSLLGQCMYFGLSFSRVGADFRGQLVPVFQQVAISTFQKAIQEAVEKFQDEMNSYTLISTPAVLGSSALPAAAPVTQPGTLQPPMVLLDFPPLACFLNSILVAFNDLRLCCPVALAQEVTRALEDALDKVTKVILAFHRAEEAAFSSGEQELFVQFCTVFLEDLVPYLNRCLQVLFPPAQIAQTLGIPPTQLSKYGNLGHVNVSVVQEPLAFILPKREPVFCLDKELVPELPAPAPALPPNAPSPEPVTPVTPAVPDAGQEEVESAGPPQPDEPSAGI.

Positions 580-598 are enriched in pro residues; it reads PAPAPALPPNAPSPEPVTP. Residues 580 to 626 form a disordered region; sequence PAPAPALPPNAPSPEPVTPVTPAVPDAGQEEVESAGPPQPDEPSAGI.

Belongs to the COG8 family. In terms of assembly, component of the conserved oligomeric Golgi complex which is composed of eight different subunits and is required for normal Golgi morphology and localization.

The protein resides in the golgi apparatus membrane. In terms of biological role, required for normal Golgi function. The polypeptide is Conserved oligomeric Golgi complex subunit 8 (COG8) (Bos taurus (Bovine)).